Here is a 427-residue protein sequence, read N- to C-terminus: Glutamate-1-semialdehyde 2,1-aminomutase 1 (427 aa).

Lys267 carries the post-translational modification N6-(pyridoxal phosphate)lysine.

Belongs to the class-III pyridoxal-phosphate-dependent aminotransferase family. HemL subfamily. As to quaternary structure, homodimer. Pyridoxal 5'-phosphate is required as a cofactor.

The protein localises to the cytoplasm. The enzyme catalyses (S)-4-amino-5-oxopentanoate = 5-aminolevulinate. It participates in porphyrin-containing compound metabolism; protoporphyrin-IX biosynthesis; 5-aminolevulinate from L-glutamyl-tRNA(Glu): step 2/2. The polypeptide is Glutamate-1-semialdehyde 2,1-aminomutase 1 (Staphylococcus epidermidis (strain ATCC 35984 / DSM 28319 / BCRC 17069 / CCUG 31568 / BM 3577 / RP62A)).